We begin with the raw amino-acid sequence, 269 residues long: Leucinostatins biosynthesis cluster protein T (269 aa).

Residues 1 to 15 (MHIILTGTGLVGAIA) form the signal peptide. N-linked (GlcNAc...) asparagine glycosylation occurs at Asn-254.

In terms of biological role, part of the gene cluster that mediates the biosynthesis of the lipopeptide antibiotics leucinostatins that show extensive biological activities, including antimalarial, antiviral, antibacterial, antifungal, and antitumor activities, as well as phytotoxic. The function of lcsT within the leucinostatins biosynthesis has not been identified yet. This Purpureocillium lilacinum (Paecilomyces lilacinus) protein is Leucinostatins biosynthesis cluster protein T.